Reading from the N-terminus, the 147-residue chain is uncharacterized protein (147 aa).

Positions 1–37 (MVALFKSSLGRPEQHQTPQIRISPASSNVEHSEKQPR) are disordered. The segment covering 15–29 (HQTPQIRISPASSNV) has biased composition (polar residues). One can recognise a Cytochrome b5 heme-binding domain in the interval 71–147 (PIPVTKEELA…LKTSFVGFLV (77 aa)). Heme is bound by residues His-106 and His-129.

Belongs to the cytochrome b5 family.

This is an uncharacterized protein from Schizosaccharomyces pombe (strain 972 / ATCC 24843) (Fission yeast).